Consider the following 114-residue polypeptide: Notch-regulated ankyrin repeat-containing protein (114 aa).

ANK repeat units follow at residues 50 to 79 (EGQT…DIRL) and 83 to 112 (DGWS…YAAS).

This sequence belongs to the NRARP family. As to quaternary structure, interacts with LEF1.

Its function is as follows. Downstream effector of Notch signaling. Involved in the regulation of liver cancer cells self-renewal. Involved in angiogenesis acting downstream of Notch at branch points to regulate vascular density. Proposed to integrate endothelial Notch and Wnt signaling to control stalk cell proliferation and to stablilize new endothelial connections during angiogenesis. During somitogenesis involved in maintenance of proper somite segmentation and proper numbers of somites and vertebrae. Required for proper anterior-posterior somite patterning. Proposed to function in a negative feedback loop to destabilize Notch 1 intracellular domain (NICD) and down-regulate the Notch signal, preventing expansion of the Notch signal into the anterior somite domain. The chain is Notch-regulated ankyrin repeat-containing protein (NRARP) from Homo sapiens (Human).